A 511-amino-acid chain; its full sequence is Histidine ammonia-lyase (511 aa).

A cross-link (5-imidazolinone (Ala-Gly)) is located at residues 143–145; the sequence is ASG. Ser144 is subject to 2,3-didehydroalanine (Ser).

This sequence belongs to the PAL/histidase family. Contains an active site 4-methylidene-imidazol-5-one (MIO), which is formed autocatalytically by cyclization and dehydration of residues Ala-Ser-Gly.

The protein resides in the cytoplasm. The enzyme catalyses L-histidine = trans-urocanate + NH4(+). It functions in the pathway amino-acid degradation; L-histidine degradation into L-glutamate; N-formimidoyl-L-glutamate from L-histidine: step 1/3. This Idiomarina loihiensis (strain ATCC BAA-735 / DSM 15497 / L2-TR) protein is Histidine ammonia-lyase.